Reading from the N-terminus, the 193-residue chain is Homeobox protein HD-12 (193 aa).

The segment at residues 123–185 (SVIRRINFPK…NARRRILPFM (63 aa)) is a DNA-binding region (homeobox; TALE-type).

This sequence belongs to the TALE/KNOX homeobox family.

The protein localises to the nucleus. The polypeptide is Homeobox protein HD-12 (HD-12) (Encephalitozoon cuniculi (strain GB-M1) (Microsporidian parasite)).